Here is a 294-residue protein sequence, read N- to C-terminus: Elongation factor Ts (294 aa).

The interval 79 to 82 (TDFV) is involved in Mg(2+) ion dislocation from EF-Tu.

This sequence belongs to the EF-Ts family.

The protein localises to the cytoplasm. In terms of biological role, associates with the EF-Tu.GDP complex and induces the exchange of GDP to GTP. It remains bound to the aminoacyl-tRNA.EF-Tu.GTP complex up to the GTP hydrolysis stage on the ribosome. In Oceanobacillus iheyensis (strain DSM 14371 / CIP 107618 / JCM 11309 / KCTC 3954 / HTE831), this protein is Elongation factor Ts.